A 146-amino-acid polypeptide reads, in one-letter code: 3-hydroxyacyl-[acyl-carrier-protein] dehydratase FabZ (146 aa).

Residue histidine 49 is part of the active site.

The protein belongs to the thioester dehydratase family. FabZ subfamily.

The protein localises to the cytoplasm. It catalyses the reaction a (3R)-hydroxyacyl-[ACP] = a (2E)-enoyl-[ACP] + H2O. Its function is as follows. Involved in unsaturated fatty acids biosynthesis. Catalyzes the dehydration of short chain beta-hydroxyacyl-ACPs and long chain saturated and unsaturated beta-hydroxyacyl-ACPs. This is 3-hydroxyacyl-[acyl-carrier-protein] dehydratase FabZ from Ectopseudomonas mendocina (strain ymp) (Pseudomonas mendocina).